The chain runs to 379 residues: Protein hairy (379 aa).

The interval 20–50 (STQQQQQQQQHKEAPIKSDRRSNKPIMEKRR) is disordered. A compositionally biased stretch (basic and acidic residues) spans 29 to 47 (QHKEAPIKSDRRSNKPIME). An interaction with Topors region spans residues 36–55 (KSDRRSNKPIMEKRRRARIN). Residues 38 to 95 (DRRSNKPIMEKRRRARINNCLNELKTLILDATKKDPARHSKLEKADILEKTVKHLQEL) enclose the bHLH domain. In terms of domain architecture, Orange spans 114 to 143 (FKAGFADCANEVSRFPGLDSTQRRRLLQHL). Disordered regions lie at residues 167-208 (QSLH…NTTA) and 298-345 (QRTA…VKPS). Low complexity-rich tracts occupy residues 182 to 207 (PEQE…TNTT) and 301 to 328 (ASTG…GSYA). The short motif at 376–379 (WRPW) is the WRPW motif element.

As to quaternary structure, transcription repression requires formation of a complex with a corepressor protein (Groucho).

It localises to the nucleus. Pair-rule protein that regulates embryonic segmentation and adult bristle patterning. Transcriptional repressor of genes that require a bHLH protein for their transcription (e.g. ftz). The sequence is that of Protein hairy from Drosophila virilis (Fruit fly).